The sequence spans 43 residues: Plasma membrane ATPase proteolipid 2 (43 aa).

Residues 1–5 (MLMST) constitute a propeptide that is removed on maturation. A helical membrane pass occupies residues 9–29 (GVILVFILVGLACIAIISTII). Residues 30 to 43 (YRKWQARQRGLQRF) are Cytoplasmic-facing.

Monomer and homodimer. Associated with the 100 kDa subunit of the plasma membrane H(+)-ATPase.

Its subcellular location is the cell membrane. The polypeptide is Plasma membrane ATPase proteolipid 2 (PMP2) (Saccharomyces cerevisiae (strain ATCC 204508 / S288c) (Baker's yeast)).